Here is a 214-residue protein sequence, read N- to C-terminus: Heat shock 70 kDa protein cognate 1 (214 aa).

Belongs to the heat shock protein 70 family.

The chain is Heat shock 70 kDa protein cognate 1 (Hsc70-1) from Drosophila simulans (Fruit fly).